A 663-amino-acid chain; its full sequence is UvrABC system protein B (663 aa).

Residues 26 to 183 (DGLESGLAKQ…KRLAEMQYTR (158 aa)) form the Helicase ATP-binding domain. 39 to 46 (GVTGSGKT) serves as a coordination point for ATP. Residues 92 to 115 (YYDYYQPEAYVPASDTFIEKDASI) carry the Beta-hairpin motif. Positions 430–596 (QVDDLMSEIR…GINKSVEDIL (167 aa)) constitute a Helicase C-terminal domain. The UVR domain occupies 624 to 659 (AKQINALEKQMYAHAQNMEFELAAKIRDEYLLLKEQ).

It belongs to the UvrB family. As to quaternary structure, forms a heterotetramer with UvrA during the search for lesions. Interacts with UvrC in an incision complex.

It is found in the cytoplasm. The UvrABC repair system catalyzes the recognition and processing of DNA lesions. A damage recognition complex composed of 2 UvrA and 2 UvrB subunits scans DNA for abnormalities. Upon binding of the UvrA(2)B(2) complex to a putative damaged site, the DNA wraps around one UvrB monomer. DNA wrap is dependent on ATP binding by UvrB and probably causes local melting of the DNA helix, facilitating insertion of UvrB beta-hairpin between the DNA strands. Then UvrB probes one DNA strand for the presence of a lesion. If a lesion is found the UvrA subunits dissociate and the UvrB-DNA preincision complex is formed. This complex is subsequently bound by UvrC and the second UvrB is released. If no lesion is found, the DNA wraps around the other UvrB subunit that will check the other stand for damage. This chain is UvrABC system protein B, found in Legionella pneumophila (strain Corby).